Reading from the N-terminus, the 98-residue chain is Prolactin-releasing peptide (98 aa).

An N-terminal signal peptide occupies residues 1–22; the sequence is MKAVGAWLLCLLLLGLALQGAA. Disordered stretches follow at residues 52 to 71 and 79 to 98; these read RFGRRRAAPGDGPRPGPRRV and GGAEPSRALPGRLTAQLVQE. At F53 the chain carries Phenylalanine amide. The propeptide occupies 58–98; that stretch reads AAPGDGPRPGPRRVPACFRLEGGAEPSRALPGRLTAQLVQE.

In terms of processing, amidation of C-terminus is required for receptor interaction. As to expression, medulla oblongata and hypothalamus.

The protein localises to the secreted. Stimulates prolactin (PRL) release and regulates the expression of prolactin through its receptor GPR10. May stimulate lactotrophs directly to secrete PRL. The polypeptide is Prolactin-releasing peptide (PRLH) (Bos taurus (Bovine)).